The chain runs to 654 residues: Threonine--tRNA ligase (654 aa).

Positions 1–63 (MASINVKFPD…TTDGSIEIIA (63 aa)) constitute a TGS domain. A catalytic region spans residues 248–546 (DHRVIGNELD…LTEIYKGAFP (299 aa)). Zn(2+)-binding residues include Cys-342, His-393, and His-523.

Belongs to the class-II aminoacyl-tRNA synthetase family. As to quaternary structure, homodimer. Zn(2+) serves as cofactor.

It is found in the cytoplasm. It carries out the reaction tRNA(Thr) + L-threonine + ATP = L-threonyl-tRNA(Thr) + AMP + diphosphate + H(+). Functionally, catalyzes the attachment of threonine to tRNA(Thr) in a two-step reaction: L-threonine is first activated by ATP to form Thr-AMP and then transferred to the acceptor end of tRNA(Thr). Also edits incorrectly charged L-seryl-tRNA(Thr). The sequence is that of Threonine--tRNA ligase from Lactiplantibacillus plantarum (strain ATCC BAA-793 / NCIMB 8826 / WCFS1) (Lactobacillus plantarum).